We begin with the raw amino-acid sequence, 62 residues long: Photosystem II reaction center protein Z (62 aa).

2 helical membrane-spanning segments follow: residues 8–28 (AVFA…VVFA) and 41–61 (FSGT…NSLI).

Belongs to the PsbZ family. In terms of assembly, PSII is composed of 1 copy each of membrane proteins PsbA, PsbB, PsbC, PsbD, PsbE, PsbF, PsbH, PsbI, PsbJ, PsbK, PsbL, PsbM, PsbT, PsbY, PsbZ, Psb30/Ycf12, at least 3 peripheral proteins of the oxygen-evolving complex and a large number of cofactors. It forms dimeric complexes.

The protein localises to the plastid. Its subcellular location is the chloroplast thylakoid membrane. In terms of biological role, may control the interaction of photosystem II (PSII) cores with the light-harvesting antenna, regulates electron flow through the 2 photosystem reaction centers. PSII is a light-driven water plastoquinone oxidoreductase, using light energy to abstract electrons from H(2)O, generating a proton gradient subsequently used for ATP formation. The chain is Photosystem II reaction center protein Z from Nicotiana sylvestris (Wood tobacco).